The sequence spans 101 residues: Small ribosomal subunit protein uS14 (101 aa).

This sequence belongs to the universal ribosomal protein uS14 family. In terms of assembly, part of the 30S ribosomal subunit. Contacts proteins S3 and S10.

Its function is as follows. Binds 16S rRNA, required for the assembly of 30S particles and may also be responsible for determining the conformation of the 16S rRNA at the A site. This is Small ribosomal subunit protein uS14 from Aeromonas hydrophila subsp. hydrophila (strain ATCC 7966 / DSM 30187 / BCRC 13018 / CCUG 14551 / JCM 1027 / KCTC 2358 / NCIMB 9240 / NCTC 8049).